A 1387-amino-acid polypeptide reads, in one-letter code: DNA-directed RNA polymerase subunit beta'' (1387 aa).

Zn(2+)-binding residues include C224, C295, C302, and C305. The disordered stretch occupies residues 883 to 903; it reads SHTGKRNDPAGSGLIPDNGSD.

This sequence belongs to the RNA polymerase beta' chain family. RpoC2 subfamily. As to quaternary structure, in plastids the minimal PEP RNA polymerase catalytic core is composed of four subunits: alpha, beta, beta', and beta''. When a (nuclear-encoded) sigma factor is associated with the core the holoenzyme is formed, which can initiate transcription. Zn(2+) is required as a cofactor.

Its subcellular location is the plastid. It localises to the chloroplast. It catalyses the reaction RNA(n) + a ribonucleoside 5'-triphosphate = RNA(n+1) + diphosphate. DNA-dependent RNA polymerase catalyzes the transcription of DNA into RNA using the four ribonucleoside triphosphates as substrates. This chain is DNA-directed RNA polymerase subunit beta'', found in Platanus occidentalis (Sycamore).